The following is a 122-amino-acid chain: Small ribosomal subunit protein bS6 (122 aa).

The protein belongs to the bacterial ribosomal protein bS6 family.

Its function is as follows. Binds together with bS18 to 16S ribosomal RNA. This Neisseria meningitidis serogroup C (strain 053442) protein is Small ribosomal subunit protein bS6.